A 247-amino-acid chain; its full sequence is Cytochrome c oxidase subunit 2 (247 aa).

Residues 1 to 11 (MLLIINNIINN) form the signal peptide. The Mitochondrial intermembrane portion of the chain corresponds to 12–38 (DVPTPWGVYFQDSATPNHEGIIELHDN). The chain crosses the membrane as a helical span at residues 39 to 59 (IMFYLVLILCLVSWLLFSIVK). Residues 60 to 78 (DGSKNPLPHKYLVHGQTIE) lie on the Mitochondrial matrix side of the membrane. The chain crosses the membrane as a helical span at residues 79-101 (IIWTILPALVLLVIAFPSFILLY). The Mitochondrial intermembrane segment spans residues 102-247 (LCDEVISPAM…KEFLTWLNEQ (146 aa)). Positions 182, 217, 219, 221, 225, and 228 each coordinate Cu cation. A Mg(2+)-binding site is contributed by Glu-219.

The protein belongs to the cytochrome c oxidase subunit 2 family. Component of the cytochrome c oxidase (complex IV, CIV), a multisubunit enzyme composed of a catalytic core of 3 subunits and several supernumerary subunits. The complex exists as a monomer or a dimer and forms supercomplexes (SCs) in the inner mitochondrial membrane with ubiquinol-cytochrome c oxidoreductase (cytochrome b-c1 complex, complex III, CIII). Requires Cu cation as cofactor. In terms of processing, the signal sequence of COX2 is processed by IMP1.

It is found in the mitochondrion inner membrane. The enzyme catalyses 4 Fe(II)-[cytochrome c] + O2 + 8 H(+)(in) = 4 Fe(III)-[cytochrome c] + 2 H2O + 4 H(+)(out). Functionally, component of the cytochrome c oxidase, the last enzyme in the mitochondrial electron transport chain which drives oxidative phosphorylation. The respiratory chain contains 3 multisubunit complexes succinate dehydrogenase (complex II, CII), ubiquinol-cytochrome c oxidoreductase (cytochrome b-c1 complex, complex III, CIII) and cytochrome c oxidase (complex IV, CIV), that cooperate to transfer electrons derived from NADH and succinate to molecular oxygen, creating an electrochemical gradient over the inner membrane that drives transmembrane transport and the ATP synthase. Cytochrome c oxidase is the component of the respiratory chain that catalyzes the reduction of oxygen to water. Electrons originating from reduced cytochrome c in the intermembrane space (IMS) are transferred via the dinuclear copper A center (CU(A)) of subunit 2 and heme A of subunit 1 to the active site in subunit 1, a binuclear center (BNC) formed by heme A3 and copper B (CU(B)). The BNC reduces molecular oxygen to 2 water molecules using 4 electrons from cytochrome c in the IMS and 4 protons from the mitochondrial matrix. The chain is Cytochrome c oxidase subunit 2 (COX2) from Wickerhamomyces canadensis (Yeast).